A 791-amino-acid chain; its full sequence is Organellar oligopeptidase A, chloroplastic/mitochondrial (791 aa).

A chloroplast and mitochondrion-targeting transit peptide spans 1–82 (MLMATPTSRA…SSPPSMSSAA (82 aa)). Coiled-coil stretches lie at residues 118 to 138 (RPGIRALLQHLEAELEELEKS) and 239 to 259 (DDEKREEFNKIEQELEKLSHK). Histidine 571 lines the Zn(2+) pocket. The active site involves glutamate 572. Zn(2+) contacts are provided by histidine 575 and glutamate 601. Position 703–709 (703–709 (HIFAGGY)) interacts with substrate.

The protein belongs to the peptidase M3 family. Zn(2+) is required as a cofactor.

The protein resides in the mitochondrion matrix. The protein localises to the plastid. It localises to the chloroplast stroma. It carries out the reaction Hydrolysis of oligopeptides, with broad specificity. Gly or Ala commonly occur as P1 or P1' residues, but more distant residues are also important, as is shown by the fact that Z-Gly-Pro-Gly-|-Gly-Pro-Ala is cleaved, but not Z-(Gly)(5).. Its activity is regulated as follows. Inhibited by salicylic acid. In terms of biological role, oligopeptidase degrading short peptides from 8 to 23 amino acid residues. Plays a role in the degradation of transit peptides and of peptides derived from other proteolytic events. Does not exhibit a strict cleavage pattern. Binds salicylic acid. This is Organellar oligopeptidase A, chloroplastic/mitochondrial from Arabidopsis thaliana (Mouse-ear cress).